Here is a 329-residue protein sequence, read N- to C-terminus: CDP-6-deoxy-L-threo-D-glycero-4-hexulose-3-dehydrase reductase (329 aa).

In terms of domain architecture, 2Fe-2S ferredoxin-type spans 2 to 93 (SLNVKLHPSG…ELDVNYYPEL (92 aa)). [2Fe-2S] cluster is bound by residues cysteine 37, cysteine 42, cysteine 45, and cysteine 75. An FAD-binding FR-type domain is found at 98-197 (KKTYPCKLDS…EGPQGTFFVR (100 aa)).

In terms of assembly, monomer.

It functions in the pathway nucleotide-sugar biosynthesis; CDP-ascarylose biosynthesis. It participates in bacterial outer membrane biogenesis; lipopolysaccharide biosynthesis. Participates in the conversion of CDP-6-deoxy-D-glycero-L-threo-4-hexulose to 3,6-dideoxy-D-glycero-D-glycero-4-hexulose together with CDP-6-deoxy-D-glycero-L-threo-4-hexulose-3-dehydrase (E1) in two consecutive steps. The detailed mechanism of E3 is not yet resolved. This chain is CDP-6-deoxy-L-threo-D-glycero-4-hexulose-3-dehydrase reductase (ascD), found in Yersinia pseudotuberculosis serotype I (strain IP32953).